The chain runs to 263 residues: Large ribosomal subunit protein uL23m (263 aa).

A mitochondrion-targeting transit peptide spans 1–45 (MPRLTVGTKNMLYPLQKTLAVGSCKPEQVPIRSLASVVESSSKIL).

This sequence belongs to the universal ribosomal protein uL23 family. As to quaternary structure, component of the mitochondrial large ribosomal subunit (mt-LSU). Mature yeast 74S mitochondrial ribosomes consist of a small (37S) and a large (54S) subunit. The 37S small subunit contains a 15S ribosomal RNA (15S mt-rRNA) and 34 different proteins. The 54S large subunit contains a 21S rRNA (21S mt-rRNA) and 46 different proteins. uL23m forms the wall of the exit tunnel. Interacts with the C-terminus of OXA1.

The protein resides in the mitochondrion. In terms of biological role, component of the mitochondrial ribosome (mitoribosome), a dedicated translation machinery responsible for the synthesis of mitochondrial genome-encoded proteins, including at least some of the essential transmembrane subunits of the mitochondrial respiratory chain. The mitoribosomes are attached to the mitochondrial inner membrane and translation products are cotranslationally integrated into the membrane. This Saccharomyces cerevisiae (strain ATCC 204508 / S288c) (Baker's yeast) protein is Large ribosomal subunit protein uL23m (MRP20).